Reading from the N-terminus, the 357-residue chain is Glycerol-3-phosphate dehydrogenase [NAD(P)+] (357 aa).

Positions 30, 31, 51, and 124 each coordinate NADPH. 2 residues coordinate sn-glycerol 3-phosphate: Lys-124 and Gly-152. Ala-156 lines the NADPH pocket. Residues Lys-207, Asp-260, Ser-270, Arg-271, and Asn-272 each coordinate sn-glycerol 3-phosphate. Catalysis depends on Lys-207, which acts as the Proton acceptor. Arg-271 is an NADPH binding site. Glu-297 contacts NADPH.

The protein belongs to the NAD-dependent glycerol-3-phosphate dehydrogenase family.

It is found in the cytoplasm. It carries out the reaction sn-glycerol 3-phosphate + NAD(+) = dihydroxyacetone phosphate + NADH + H(+). The catalysed reaction is sn-glycerol 3-phosphate + NADP(+) = dihydroxyacetone phosphate + NADPH + H(+). The protein operates within membrane lipid metabolism; glycerophospholipid metabolism. Functionally, catalyzes the reduction of the glycolytic intermediate dihydroxyacetone phosphate (DHAP) to sn-glycerol 3-phosphate (G3P), the key precursor for phospholipid synthesis. The sequence is that of Glycerol-3-phosphate dehydrogenase [NAD(P)+] from Acinetobacter baumannii (strain AB307-0294).